A 267-amino-acid chain; its full sequence is Phosphate import ATP-binding protein PstB 2 (267 aa).

The ABC transporter domain maps to 21 to 262 (LSTKDVHVYY…AKLQSTNDYV (242 aa)). 53–60 (GPSGSGKS) contributes to the ATP binding site.

The protein belongs to the ABC transporter superfamily. Phosphate importer (TC 3.A.1.7) family. In terms of assembly, the complex is composed of two ATP-binding proteins (PstB), two transmembrane proteins (PstC and PstA) and a solute-binding protein (PstS).

Its subcellular location is the cell membrane. The catalysed reaction is phosphate(out) + ATP + H2O = ADP + 2 phosphate(in) + H(+). Functionally, part of the ABC transporter complex PstSACB involved in phosphate import. Responsible for energy coupling to the transport system. The sequence is that of Phosphate import ATP-binding protein PstB 2 from Streptococcus pneumoniae (strain ATCC BAA-255 / R6).